Reading from the N-terminus, the 189-residue chain is dTTP/UTP pyrophosphatase (189 aa).

Asp70 functions as the Proton acceptor in the catalytic mechanism.

The protein belongs to the Maf family. YhdE subfamily. The cofactor is a divalent metal cation.

The protein resides in the cytoplasm. It catalyses the reaction dTTP + H2O = dTMP + diphosphate + H(+). It carries out the reaction UTP + H2O = UMP + diphosphate + H(+). Nucleoside triphosphate pyrophosphatase that hydrolyzes dTTP and UTP. May have a dual role in cell division arrest and in preventing the incorporation of modified nucleotides into cellular nucleic acids. This chain is dTTP/UTP pyrophosphatase, found in Akkermansia muciniphila (strain ATCC BAA-835 / DSM 22959 / JCM 33894 / BCRC 81048 / CCUG 64013 / CIP 107961 / Muc).